The following is a 115-amino-acid chain: Large ribosomal subunit protein bL19 (115 aa).

It belongs to the bacterial ribosomal protein bL19 family.

Its function is as follows. This protein is located at the 30S-50S ribosomal subunit interface and may play a role in the structure and function of the aminoacyl-tRNA binding site. This Akkermansia muciniphila (strain ATCC BAA-835 / DSM 22959 / JCM 33894 / BCRC 81048 / CCUG 64013 / CIP 107961 / Muc) protein is Large ribosomal subunit protein bL19.